Consider the following 886-residue polypeptide: Regulatory protein LEU3 (886 aa).

A disordered region spans residues 1-28 (MEGRSDFVATSQSGSEMSHSETRNRTGM). Positions 8–17 (VATSQSGSEM) are enriched in polar residues. Residues 37–67 (CVECRQQKSKCDAHERAPEPCTKCAKKNVPC) constitute a DNA-binding region (zn(2)-C6 fungal-type). Disordered regions lie at residues 673 to 709 (TAYN…MDSQ) and 734 to 756 (PLDP…TPNS). The segment covering 677-697 (VDEEEEEDEDEEGEEEEEEEE) has biased composition (acidic residues). The segment covering 743-753 (GSTSSGSSLTT) has biased composition (low complexity). The 9aaTAD motif lies at 874–882 (DILMNEFAF).

Its subcellular location is the nucleus. Factor for control of RNA levels of a group of leucine-specific genes. The sequence is that of Regulatory protein LEU3 (LEU3) from Saccharomyces cerevisiae (strain ATCC 204508 / S288c) (Baker's yeast).